The chain runs to 94 residues: Large ribosomal subunit protein eL42 (94 aa).

Positions 11, 14, 71, and 74 each coordinate Zn(2+). The C4-type zinc-finger motif lies at cysteine 11–cysteine 74.

The protein belongs to the eukaryotic ribosomal protein eL42 family. In terms of assembly, part of the 50S ribosomal subunit. Zn(2+) is required as a cofactor.

In terms of biological role, binds to the 23S rRNA. The sequence is that of Large ribosomal subunit protein eL42 from Pyrococcus horikoshii (strain ATCC 700860 / DSM 12428 / JCM 9974 / NBRC 100139 / OT-3).